We begin with the raw amino-acid sequence, 89 residues long: Class I hydrophobin C (89 aa).

Residues 1–16 (MKFSLATIALAAAVAA) form the signal peptide. 4 disulfide bridges follow: C28-C68, C39-C60, C40-C52, and C69-C85. N-linked (GlcNAc...) asparagine glycosylation occurs at N36.

It belongs to the fungal hydrophobin family.

The protein resides in the secreted. The protein localises to the cell wall. Its subcellular location is the vacuole. It localises to the cytoplasmic vesicle. In terms of biological role, aerial growth, conidiation, and dispersal of filamentous fungi in the environment rely upon a capability of their secreting small amphipathic proteins called hydrophobins (HPBs) with low sequence identity. Class I can self-assemble into an outermost layer of rodlet bundles on aerial cell surfaces, conferring cellular hydrophobicity that supports fungal growth, development and dispersal; whereas Class II form highly ordered films at water-air interfaces through intermolecular interactions but contribute nothing to the rodlet structure. Hyd1C contributes to certain cell wall-related features, such as hydrophobicity but is not involved in cell wall-related events during fungal proliferation in host hemocoel. Does not contribute to conidial hydrophobicity. This is Class I hydrophobin C from Beauveria bassiana (strain ARSEF 2860) (White muscardine disease fungus).